We begin with the raw amino-acid sequence, 296 residues long: Formamidopyrimidine-DNA glycosylase (296 aa).

The Schiff-base intermediate with DNA role is filled by Pro-2. The Proton donor role is filled by Glu-3. The Proton donor; for beta-elimination activity role is filled by Lys-58. Residues His-106, Arg-125, and Lys-168 each coordinate DNA. The FPG-type zinc finger occupies 259–295 (RVYDRVGHACPTKGCTGRIGRIVQGGRSTFFCETCQV). Catalysis depends on Arg-285, which acts as the Proton donor; for delta-elimination activity.

This sequence belongs to the FPG family. Monomer. The cofactor is Zn(2+).

The catalysed reaction is Hydrolysis of DNA containing ring-opened 7-methylguanine residues, releasing 2,6-diamino-4-hydroxy-5-(N-methyl)formamidopyrimidine.. It catalyses the reaction 2'-deoxyribonucleotide-(2'-deoxyribose 5'-phosphate)-2'-deoxyribonucleotide-DNA = a 3'-end 2'-deoxyribonucleotide-(2,3-dehydro-2,3-deoxyribose 5'-phosphate)-DNA + a 5'-end 5'-phospho-2'-deoxyribonucleoside-DNA + H(+). Its function is as follows. Involved in base excision repair of DNA damaged by oxidation or by mutagenic agents. Acts as a DNA glycosylase that recognizes and removes damaged bases. Has a preference for oxidized purines, such as 7,8-dihydro-8-oxoguanine (8-oxoG). Has AP (apurinic/apyrimidinic) lyase activity and introduces nicks in the DNA strand. Cleaves the DNA backbone by beta-delta elimination to generate a single-strand break at the site of the removed base with both 3'- and 5'-phosphates. The polypeptide is Formamidopyrimidine-DNA glycosylase (Methylorubrum populi (strain ATCC BAA-705 / NCIMB 13946 / BJ001) (Methylobacterium populi)).